The following is a 1148-amino-acid chain: Phospholipid-transporting ATPase IB (1148 aa).

Topologically, residues 1–44 are cytoplasmic; it reads MSRATSVGDQLEAPARIIYLNQSHLNKFCDNRISTAKYSVLTFL. T5 bears the Phosphothreonine mark. The chain crosses the membrane as a helical span at residues 45 to 66; that stretch reads PRFLYEQIRRAANAFFLFIALL. Residues 67–71 are Exoplasmic loop-facing; the sequence is QQIPD. A helical transmembrane segment spans residues 72–94; that stretch reads VSPTGRYTTLVPLVIILTIAGIK. The Cytoplasmic segment spans residues 95-276; the sequence is EIIEDFKRHK…SNVEKVTNVQ (182 aa). Residues 277–298 traverse the membrane as a helical segment; it reads ILVLFGILLVMALVSSVGALFW. Over 299–323 the chain is Exoplasmic loop; that stretch reads NGSHGGKSWYIKKMDTNSDNFGYNL. The helical transmembrane segment at 324–345 threads the bilayer; that stretch reads LTFIILYNNLIPISLLVTLEVV. The Cytoplasmic segment spans residues 346–837; it reads KYTQALFINW…GAWSYNRVTK (492 aa). The active-site 4-aspartylphosphate intermediate is the D388. Positions 388, 389, 390, 488, 529, 552, 585, 665, 666, 667, 755, and 761 each coordinate ATP. Residue D388 participates in Mg(2+) binding. T390 is a Mg(2+) binding site. D781 lines the Mg(2+) pocket. ATP is bound by residues N784 and D785. Residue D785 participates in Mg(2+) binding. A helical transmembrane segment spans residues 838-858; the sequence is CILYCFYKNVVLYIIELWFAF. At 859–870 the chain is on the exoplasmic loop side; the sequence is VNGFSGQILFER. The helical transmembrane segment at 871-890 threads the bilayer; that stretch reads WCIGLYNVIFTALPPFTLGI. Residues 891–920 lie on the Cytoplasmic side of the membrane; it reads FERSCTQESMLRFPQLYRITQNAEGFNTKV. A helical transmembrane segment spans residues 921–942; the sequence is FWGHCINALVHSLILFWVPMKA. Residues 943–956 lie on the Exoplasmic loop side of the membrane; sequence LEHDTPVTSGHATD. A helical transmembrane segment spans residues 957-979; the sequence is YLFVGNIVYTYVVVTVCLKAGLE. Topologically, residues 980–985 are cytoplasmic; sequence TTAWTK. A helical membrane pass occupies residues 986–1006; the sequence is FSHLAVWGSMLIWLVFFGVYS. Over 1007 to 1024 the chain is Exoplasmic loop; sequence TIWPTIPIAPDMKGQATM. The helical transmembrane segment at 1025 to 1049 threads the bilayer; that stretch reads VLSSAYFWLGLFLVPTACLIEDVAW. Residues 1050 to 1148 are Cytoplasmic-facing; it reads RAAKHTCKKT…DTTKENSRKK (99 aa).

It belongs to the cation transport ATPase (P-type) (TC 3.A.3) family. Type IV subfamily. In terms of assembly, component of a P4-ATPase flippase complex which consists of a catalytic alpha subunit and an accessory beta subunit. Interacts with TMEM30A to form a flippase complex. Mg(2+) is required as a cofactor. Found in testis, heart and brain. Most abundant in testis. Also detected in fetal tissues. Expressed in retinal photoreceptor cells; detected in retina outer nuclear layer and inner segment (at protein level).

The protein localises to the membrane. The protein resides in the golgi apparatus membrane. It is found in the endosome membrane. Its subcellular location is the cell membrane. It localises to the photoreceptor outer segment membrane. The protein localises to the photoreceptor inner segment membrane. The catalysed reaction is ATP + H2O + phospholipidSide 1 = ADP + phosphate + phospholipidSide 2.. The enzyme catalyses a 1,2-diacyl-sn-glycero-3-phospho-L-serine(out) + ATP + H2O = a 1,2-diacyl-sn-glycero-3-phospho-L-serine(in) + ADP + phosphate + H(+). It catalyses the reaction a 1,2-diacyl-sn-glycero-3-phosphoethanolamine(in) + ATP + H2O = a 1,2-diacyl-sn-glycero-3-phosphoethanolamine(out) + ADP + phosphate + H(+). Its function is as follows. Catalytic component of a P4-ATPase flippase complex which catalyzes the hydrolysis of ATP coupled to the transport of aminophospholipids from the outer to the inner leaflet of various membranes and ensures the maintenance of asymmetric distribution of phospholipids. Able to translocate phosphatidylserine, but not phosphatidylcholine. Phospholipid translocation also seems to be implicated in vesicle formation and in uptake of lipid signaling molecules. Reconstituted to liposomes, the ATP8A2:TMEM30A flippase complex predominantly transports phosphatidylserine (PS) and to a lesser extent phosphatidylethanolamine (PE). Phospholipid translocation is not associated with a countertransport of an inorganic ion or other charged substrate from the cytoplasmic side toward the exoplasm in connection with the phosphorylation from ATP. ATP8A2:TMEM30A may be involved in regulation of neurite outgrowth. Proposed to function in the generation and maintenance of phospholipid asymmetry in photoreceptor disk membranes and neuronal axon membranes. May be involved in vesicle trafficking in neuronal cells. Required for normal visual and auditory function; involved in photoreceptor and inner ear spiral ganglion cell survival. This chain is Phospholipid-transporting ATPase IB, found in Mus musculus (Mouse).